The following is a 191-amino-acid chain: Thymidine kinase (191 aa).

Residues Gly9 to Thr16 and Asp85 to Gln88 each bind ATP. Glu86 functions as the Proton acceptor in the catalytic mechanism. Zn(2+)-binding residues include Cys143, Cys146, Cys181, and Cys184.

Belongs to the thymidine kinase family. As to quaternary structure, homotetramer.

The protein localises to the cytoplasm. The catalysed reaction is thymidine + ATP = dTMP + ADP + H(+). The protein is Thymidine kinase of Listeria monocytogenes serotype 4b (strain F2365).